The sequence spans 164 residues: Phosphopantetheine adenylyltransferase (164 aa).

Substrate is bound at residue serine 9. Residues 9–10 (SF) and histidine 17 contribute to the ATP site. Residues lysine 41, leucine 78, and arginine 92 each contribute to the substrate site. ATP contacts are provided by residues 93–95 (GLR), glutamate 103, and 128–134 (GRVITST).

It belongs to the bacterial CoaD family. As to quaternary structure, homohexamer. Mg(2+) is required as a cofactor.

The protein resides in the cytoplasm. It catalyses the reaction (R)-4'-phosphopantetheine + ATP + H(+) = 3'-dephospho-CoA + diphosphate. Its pathway is cofactor biosynthesis; coenzyme A biosynthesis; CoA from (R)-pantothenate: step 4/5. In terms of biological role, reversibly transfers an adenylyl group from ATP to 4'-phosphopantetheine, yielding dephospho-CoA (dPCoA) and pyrophosphate. The polypeptide is Phosphopantetheine adenylyltransferase (Bartonella bacilliformis (strain ATCC 35685 / KC583 / Herrer 020/F12,63)).